The sequence spans 148 residues: uncharacterized protein (148 aa).

This is an uncharacterized protein from Methanocaldococcus jannaschii (strain ATCC 43067 / DSM 2661 / JAL-1 / JCM 10045 / NBRC 100440) (Methanococcus jannaschii).